Reading from the N-terminus, the 497-residue chain is Probable polyamine oxidase 4 (497 aa).

Residues glutamate 58, arginine 66, valine 247, and glutamate 435 each coordinate FAD. Residues 495-497 (SRM) carry the Microbody targeting signal motif.

It belongs to the flavin monoamine oxidase family. It depends on FAD as a cofactor. As to expression, highly expressed in roots, flowers and greening cotelydons. Lower expression in other tissues.

The protein localises to the peroxisome. The catalysed reaction is spermine + O2 + H2O = 3-aminopropanal + spermidine + H2O2. It catalyses the reaction spermidine + O2 + H2O = 3-aminopropanal + putrescine + H2O2. It participates in amine and polyamine degradation; spermine degradation. Its pathway is amine and polyamine degradation; spermidine degradation. Its function is as follows. Flavoenzyme involved in polyamine back-conversion. Catalyzes the oxidation of the secondary amino group of polyamines, such as spermine and spermidine. Substrate preference is spermine &gt; spermidine. No activity detected when putrescine or N(1)-acetylspermine are used as substrates. Plays an important role in the regulation of polyamine intracellular concentration. The protein is Probable polyamine oxidase 4 (PAO4) of Arabidopsis thaliana (Mouse-ear cress).